The sequence spans 228 residues: Uracil-DNA glycosylase (228 aa).

The Proton acceptor role is filled by Asp64.

It belongs to the uracil-DNA glycosylase (UDG) superfamily. UNG family.

It localises to the cytoplasm. The enzyme catalyses Hydrolyzes single-stranded DNA or mismatched double-stranded DNA and polynucleotides, releasing free uracil.. Excises uracil residues from the DNA which can arise as a result of misincorporation of dUMP residues by DNA polymerase or due to deamination of cytosine. The sequence is that of Uracil-DNA glycosylase from Yersinia pseudotuberculosis serotype O:1b (strain IP 31758).